Reading from the N-terminus, the 426-residue chain is MFKPHLLAVVSRCNSFFGCVDICCNWGNSAPRTLKGLKSVTSEQVFEREQKYGAHNYHHCSAYRAKGVSLDMEGKRYFDFLSAYSAVNQGHCHPKIVNTMVEQAQRLTLTSRAFYTDVLGEYEEFLTKLFNYDKVLPMNTGVEGGETACKIARCWAYMKKKVPENQAKIIFAENNFWGRTLSAISASTDPMSYDELRPYMPGFEIVKYNDTAALEKAFQDPNVCAYMVEPIQGEAGVVALDAGYLTEVRELCTKYNVLFIADEVQTGLARTGRMLAVDHEDVKPDLLILGKALSGGLYPVSAVLRDDHIMDCIQPGLHTAMDVMDPRMRILAASRYYVRVARERCENAQIQATYLRKELNTLPKDVVPVVRGKGLLNAIVINKKFDAWDVCLNLCKPTHGDIIRFATTGHHRGTDPRMCQYYQKYH.

Lys291 carries the post-translational modification N6-(pyridoxal phosphate)lysine.

The protein belongs to the class-III pyridoxal-phosphate-dependent aminotransferase family. Pyridoxal 5'-phosphate serves as cofactor.

It carries out the reaction a 2-oxocarboxylate + L-ornithine = L-glutamate 5-semialdehyde + an L-alpha-amino acid. It functions in the pathway amino-acid biosynthesis; L-proline biosynthesis; L-glutamate 5-semialdehyde from L-ornithine: step 1/1. The polypeptide is Ornithine aminotransferase (Vigna aconitifolia (Moth bean)).